The sequence spans 466 residues: UDP-N-acetylmuramoylalanine--D-glutamate ligase (466 aa).

An ATP-binding site is contributed by 115-121 (GTDGKTT).

It belongs to the MurCDEF family.

It is found in the cytoplasm. It carries out the reaction UDP-N-acetyl-alpha-D-muramoyl-L-alanine + D-glutamate + ATP = UDP-N-acetyl-alpha-D-muramoyl-L-alanyl-D-glutamate + ADP + phosphate + H(+). It participates in cell wall biogenesis; peptidoglycan biosynthesis. Its function is as follows. Cell wall formation. Catalyzes the addition of glutamate to the nucleotide precursor UDP-N-acetylmuramoyl-L-alanine (UMA). In Chlorobium phaeobacteroides (strain BS1), this protein is UDP-N-acetylmuramoylalanine--D-glutamate ligase.